The primary structure comprises 394 residues: Elongation factor Tu (394 aa).

The 195-residue stretch at 10 to 204 (KPHVNVGTIG…AVDEWIPTPT (195 aa)) folds into the tr-type G domain. Positions 19-26 (GHIDHGKT) are G1. 19-26 (GHIDHGKT) lines the GTP pocket. Thr-26 is a binding site for Mg(2+). Positions 60–64 (GITIN) are G2. The tract at residues 81–84 (DCPG) is G3. Residues 81–85 (DCPGH) and 136–139 (NKCD) each bind GTP. Residues 136–139 (NKCD) form a G4 region. Positions 174–176 (SAL) are G5.

It belongs to the TRAFAC class translation factor GTPase superfamily. Classic translation factor GTPase family. EF-Tu/EF-1A subfamily. As to quaternary structure, monomer.

It is found in the cytoplasm. It carries out the reaction GTP + H2O = GDP + phosphate + H(+). In terms of biological role, GTP hydrolase that promotes the GTP-dependent binding of aminoacyl-tRNA to the A-site of ribosomes during protein biosynthesis. This chain is Elongation factor Tu, found in Mycoplasma genitalium (strain ATCC 33530 / DSM 19775 / NCTC 10195 / G37) (Mycoplasmoides genitalium).